The following is a 43-amino-acid chain: Protein PsbN (43 aa).

A helical membrane pass occupies residues 5-27 (TFLSIFISAALLGITGYSIYTAF).

The protein belongs to the PsbN family.

Its subcellular location is the plastid. It is found in the cyanelle thylakoid membrane. Functionally, may play a role in photosystem I and II biogenesis. The polypeptide is Protein PsbN (Cyanophora paradoxa).